The primary structure comprises 131 residues: Amicyanin (131 aa).

Positions 1–26 (MISATKIRSCLAACVLAAFGATGALA) are cleaved as a signal peptide. A Plastocyanin-like domain is found at 27–131 (DKATIPSESP…PFMRGKVVVE (105 aa)). 4 residues coordinate Cu cation: histidine 79, cysteine 118, histidine 121, and methionine 124.

The cofactor is Cu cation.

Its subcellular location is the periplasm. It functions in the pathway one-carbon metabolism; methylamine degradation. Functionally, primary acceptor of electrons from methylamine dehydrogenase. Passes those electrons on either a soluble cytochrome c or to pseudoazurin. The polypeptide is Amicyanin (mauC) (Paracoccus denitrificans).